Consider the following 314-residue polypeptide: Zinc transporter ZIP3 (314 aa).

The Extracellular segment spans residues Met-1–Lys-3. The chain crosses the membrane as a helical span at residues Leu-4–Leu-24. Topologically, residues Leu-25–Lys-42 are cytoplasmic. The helical transmembrane segment at Ile-43–Leu-63 threads the bilayer. Residues Leu-64–Pro-85 lie on the Extracellular side of the membrane. Residues Leu-86–Leu-106 form a helical membrane-spanning segment. At Thr-107–Arg-169 the chain is on the cytoplasmic side. Phosphoserine occurs at positions 125 and 129. A helical transmembrane segment spans residues Leu-170–Leu-190. Over Gln-191–Lys-196 the chain is Extracellular. The chain crosses the membrane as a helical span at residues Val-197–Ile-217. The Cytoplasmic portion of the chain corresponds to Asn-218–Ala-229. A helical transmembrane segment spans residues Ala-230 to Ile-250. Residues Asp-251–Ser-262 are Extracellular-facing. Residues Val-263–Ala-283 traverse the membrane as a helical segment. Residues Lys-284–Arg-292 lie on the Cytoplasmic side of the membrane. Residues Leu-293–Lys-313 form a helical membrane-spanning segment. Position 314 (Trp-314) is a topological domain, extracellular.

Belongs to the ZIP transporter (TC 2.A.5) family.

It localises to the cell membrane. The protein localises to the apical cell membrane. The enzyme catalyses Zn(2+)(in) = Zn(2+)(out). Its function is as follows. Transporter for the divalent cation Zn(2+). Mediates the influx of Zn(2+) into cells from extracellular space. Controls Zn(2+) accumulation into dentate gyrus granule cells in the hippocampus. Mediates Zn(2+) reuptake from the secreted milk within the alveolar lumen. The polypeptide is Zinc transporter ZIP3 (SLC39A3) (Bos taurus (Bovine)).